The primary structure comprises 309 residues: Ornithine carbamoyltransferase (309 aa).

Residues 52–55 (STRT), glutamine 79, arginine 103, and 130–133 (HPCQ) each bind carbamoyl phosphate. L-ornithine is bound by residues asparagine 161, aspartate 221, and 225-226 (SM). Carbamoyl phosphate-binding positions include 261-262 (CL) and arginine 289.

This sequence belongs to the aspartate/ornithine carbamoyltransferase superfamily. OTCase family.

It localises to the cytoplasm. It carries out the reaction carbamoyl phosphate + L-ornithine = L-citrulline + phosphate + H(+). It functions in the pathway amino-acid biosynthesis; L-arginine biosynthesis; L-arginine from L-ornithine and carbamoyl phosphate: step 1/3. Its function is as follows. Reversibly catalyzes the transfer of the carbamoyl group from carbamoyl phosphate (CP) to the N(epsilon) atom of ornithine (ORN) to produce L-citrulline. This is Ornithine carbamoyltransferase from Methanoculleus marisnigri (strain ATCC 35101 / DSM 1498 / JR1).